The sequence spans 360 residues: Phospho-N-acetylmuramoyl-pentapeptide-transferase (360 aa).

10 consecutive transmembrane segments (helical) span residues 27–47 (IVSLLTALVISLWMGPHMIAW), 73–93 (TMGGVMILVAIIVSVLMWANL), 94–114 (SNPYVWCVLLVLAGYGAVGFV), 132–152 (WKYFWQSVIALVVAFSMYAIG), 168–188 (VMPQLGLLYVALAYFVIVGTS), 199–219 (GLAIMPTVFVAAGFALVAWAT), 236–256 (ASELVIVCTAIVGAGLGFLWF), 263–283 (VFMGDVGSLALGGALGTIAVL), 288–308 (FLLVIMGGVFVVETLSVILQV), and 338–358 (VIVRFWIISLMLVLIGLATLK).

It belongs to the glycosyltransferase 4 family. MraY subfamily. Requires Mg(2+) as cofactor.

Its subcellular location is the cell inner membrane. The enzyme catalyses UDP-N-acetyl-alpha-D-muramoyl-L-alanyl-gamma-D-glutamyl-meso-2,6-diaminopimeloyl-D-alanyl-D-alanine + di-trans,octa-cis-undecaprenyl phosphate = di-trans,octa-cis-undecaprenyl diphospho-N-acetyl-alpha-D-muramoyl-L-alanyl-D-glutamyl-meso-2,6-diaminopimeloyl-D-alanyl-D-alanine + UMP. Its pathway is cell wall biogenesis; peptidoglycan biosynthesis. Its function is as follows. Catalyzes the initial step of the lipid cycle reactions in the biosynthesis of the cell wall peptidoglycan: transfers peptidoglycan precursor phospho-MurNAc-pentapeptide from UDP-MurNAc-pentapeptide onto the lipid carrier undecaprenyl phosphate, yielding undecaprenyl-pyrophosphoryl-MurNAc-pentapeptide, known as lipid I. The sequence is that of Phospho-N-acetylmuramoyl-pentapeptide-transferase from Pectobacterium carotovorum subsp. carotovorum (strain PC1).